The primary structure comprises 146 residues: ATP synthase epsilon chain (146 aa).

The interval 103–122 (SAKKRAEQHMQEAKEKHNER) is disordered.

It belongs to the ATPase epsilon chain family. In terms of assembly, F-type ATPases have 2 components, CF(1) - the catalytic core - and CF(0) - the membrane proton channel. CF(1) has five subunits: alpha(3), beta(3), gamma(1), delta(1), epsilon(1). CF(0) has three main subunits: a, b and c.

The protein localises to the cell membrane. Produces ATP from ADP in the presence of a proton gradient across the membrane. The protein is ATP synthase epsilon chain of Lactobacillus johnsonii (strain CNCM I-12250 / La1 / NCC 533).